A 472-amino-acid polypeptide reads, in one-letter code: Transmembrane protein 8B (472 aa).

The interval 1–37 (MNMPQSLGNQPLPPEPPSLRTPAEGPGATSPPEHCWP) is disordered. Residues 1–233 (MNMPQSLGNQ…ADALTYGFQL (233 aa)) are Extracellular-facing. 2 N-linked (GlcNAc...) asparagine glycosylation sites follow: Asn92 and Asn100. The EGF-like domain occupies 182-221 (FLSPCVDDCGPYGQCKLLRTHNYLYAACECKAGWRGWGCT). 3 disulfide bridges follow: Cys186–Cys196, Cys190–Cys209, and Cys211–Cys220. A helical membrane pass occupies residues 234–254 (LSTLLLCLSNLMFLPPVVLAI). At 255–257 (RSR) the chain is on the cytoplasmic side. A helical transmembrane segment spans residues 258 to 277 (YVLEAAVYTFTMFFSTFYHA). Over 278–292 (CDQPGIVVFCIMDYD) the chain is Extracellular. A helical membrane pass occupies residues 293-313 (VLQFCDFLGSLMSVWVTVIAM). The Cytoplasmic segment spans residues 314-315 (AR). A helical transmembrane segment spans residues 316–336 (LQPVVKQVLYLLGAMLLSMAL). Residues 337-342 (QLDRHG) are Extracellular-facing. A helical membrane pass occupies residues 343–363 (LWNLLGPSLFALGILATAWTV). Topologically, residues 364 to 379 (RSVRRRHCYPPTWRRW) are cytoplasmic. A helical transmembrane segment spans residues 380 to 400 (LFCLCPGSLIAGSAILLYAFV). Residues 401–405 (ETRDN) lie on the Extracellular side of the membrane. A helical membrane pass occupies residues 406-426 (YFYIHSIWHMLIAGSVGFLLP). Topologically, residues 427–472 (PRAKTDRRVPSGARARGCGYQLCINEQEELGLVGPGGATVSSICAS) are cytoplasmic.

It belongs to the TMEM8 family. May interact with EZR. In terms of processing, N-glycosylated.

Its subcellular location is the cell membrane. The protein localises to the cytoplasm. The protein resides in the nucleus. It is found in the mitochondrion. It localises to the endoplasmic reticulum. In terms of biological role, may function as a regulator of the EGFR pathway. Probable tumor suppressor which may function in cell growth, proliferation and adhesion. In Bos taurus (Bovine), this protein is Transmembrane protein 8B (TMEM8B).